The chain runs to 388 residues: Deoxyguanosinetriphosphate triphosphohydrolase-like protein (388 aa).

The interval 1–32 is disordered; it reads MSVGMAAPRAPYSCDPDRSRGRLFAEPPSRTR. An HD domain is found at 69 to 205; it reads RLTHSLEVAQ…AALADDIAYD (137 aa).

Belongs to the dGTPase family. Type 2 subfamily.

This is Deoxyguanosinetriphosphate triphosphohydrolase-like protein from Bradyrhizobium sp. (strain ORS 278).